We begin with the raw amino-acid sequence, 176 residues long: Ferritin heavy polypeptide-like 17E (176 aa).

The 150-residue stretch at 10–159 (QNYDWQCEDA…GYLTNLRQMG (150 aa)) folds into the Ferritin-like diiron domain. Residues Cys27, Glu107, and Gln141 each coordinate Fe cation.

It belongs to the ferritin family. As to expression, expressed in the testes and spermatogonia.

This Mus musculus (Mouse) protein is Ferritin heavy polypeptide-like 17E.